A 60-amino-acid chain; its full sequence is Large ribosomal subunit protein bL32 (60 aa).

The protein belongs to the bacterial ribosomal protein bL32 family.

This is Large ribosomal subunit protein bL32 (rpmF) from Thermotoga maritima (strain ATCC 43589 / DSM 3109 / JCM 10099 / NBRC 100826 / MSB8).